We begin with the raw amino-acid sequence, 435 residues long: Probable aminotransferase gliI (435 aa).

Lys-266 carries the N6-(pyridoxal phosphate)lysine modification.

It belongs to the class-I pyridoxal-phosphate-dependent aminotransferase family. Requires pyridoxal 5'-phosphate as cofactor.

The protein operates within mycotoxin biosynthesis. Functionally, probable aminotransferase; part of the gene cluster that mediates the biosynthesis of gliotoxin, a member of the epipolythiodioxopiperazine (ETP) class of toxins characterized by a disulfide bridged cyclic dipeptide. The first step in gliotoxin biosynthesis is the condensation of serine and phenylalanine to form the cyclo-L-phenylalanyl-L-serine diketopiperazine (DKP) by the NRPS gliP. GliP is also able to produce the DKP cyclo-L-tryptophanyl-L-serine, suggesting that the substrate specificity of the first adenylation (A) domain in gliP is sufficiently relaxed to accommodate both L-Phe and L-Trp. The cytochrome P450 monooxygenase gliC has been shown to catalyze the subsequent hydroxylation of the alpha-carbon of L-Phe in cyclo-L-phenylalanyl-L-serine whereas the second cytochrome P450 enzyme, gliF, is presumably involved in the modification of the DKP side chain. The glutathione S-transferase (GST) gliG then forms a bis-glutathionylated biosynthetic intermediate which is responsible for the sulfurization of gliotoxin. This bis-glutathionylated intermediate is subsequently processed by the gamma-glutamyl cyclotransferase gliK to remove both gamma-glutamyl moieties. Subsequent processing via gliI yields a biosynthetic intermediate, which is N-methylated via the N-methyltransferase gliN, before the gliotoxin oxidoreductase gliT-mediated disulfide bridge closure. GliN-mediated amide methylation confers stability to ETP, damping the spontaneous formation of tri- and tetrasulfides. Intracellular dithiol gliotoxin oxidized by gliT is subsequently effluxed by gliA. Gliotoxin contributes to pathogenesis during invasive aspergillosis. In macrophages and neutrophils, gliotoxin showed inhibition of various different cell functions including cytokine production, antigen presentation, phagocytosis, and production of reactive oxygen species. In Aspergillus fumigatus (strain ATCC MYA-4609 / CBS 101355 / FGSC A1100 / Af293) (Neosartorya fumigata), this protein is Probable aminotransferase gliI.